The following is a 345-amino-acid chain: N-acetyl-gamma-glutamyl-phosphate reductase (345 aa).

Cys149 is a catalytic residue.

It belongs to the NAGSA dehydrogenase family. Type 1 subfamily.

It is found in the cytoplasm. It carries out the reaction N-acetyl-L-glutamate 5-semialdehyde + phosphate + NADP(+) = N-acetyl-L-glutamyl 5-phosphate + NADPH + H(+). The protein operates within amino-acid biosynthesis; L-arginine biosynthesis; N(2)-acetyl-L-ornithine from L-glutamate: step 3/4. Its function is as follows. Catalyzes the NADPH-dependent reduction of N-acetyl-5-glutamyl phosphate to yield N-acetyl-L-glutamate 5-semialdehyde. The sequence is that of N-acetyl-gamma-glutamyl-phosphate reductase from Bacillus mycoides (strain KBAB4) (Bacillus weihenstephanensis).